We begin with the raw amino-acid sequence, 108 residues long: UPF0060 membrane protein KPK_2870 (108 aa).

The next 4 membrane-spanning stretches (helical) occupy residues 6–26 (LLFF…WLWL), 29–49 (GATP…VWLL), 61–81 (AAYG…VDGV), and 86–106 (YDWA…AGWG).

This sequence belongs to the UPF0060 family.

The protein localises to the cell inner membrane. The protein is UPF0060 membrane protein KPK_2870 of Klebsiella pneumoniae (strain 342).